We begin with the raw amino-acid sequence, 158 residues long: uncharacterized protein (158 aa).

The N-terminal stretch at 1–19 (MQKLLLAVLFFSLLAIATA) is a signal peptide. Residues 82 to 158 (ANPKAEAEPG…VYENDDENEE (77 aa)) form a disordered region. The segment covering 84 to 107 (PKAEAEPGSLDKEAGTKGEKEKNG) has biased composition (basic and acidic residues). A compositionally biased stretch (acidic residues) spans 141-158 (DDDDDHDDVYENDDENEE).

Prismatic layer of shell (at protein level). Expressed primarily in the mantle with highest level in the mantle edge and lower level in the mantle pallium.

The protein resides in the secreted. This is an uncharacterized protein from Pinctada maxima (Silver-lipped pearl oyster).